Reading from the N-terminus, the 291-residue chain is Acetyl-coenzyme A carboxylase carboxyl transferase subunit beta (291 aa).

Residues 34–291 enclose the CoA carboxyltransferase N-terminal domain; that stretch reads MWTKCSNCNN…LILHGVNKYE (258 aa). Zn(2+) contacts are provided by Cys38, Cys41, Cys57, and Cys60. The C4-type zinc finger occupies 38–60; sequence CSNCNNMIYYEDLENNKYVCTKC.

This sequence belongs to the AccD/PCCB family. In terms of assembly, acetyl-CoA carboxylase is a heterohexamer composed of biotin carboxyl carrier protein (AccB), biotin carboxylase (AccC) and two subunits each of ACCase subunit alpha (AccA) and ACCase subunit beta (AccD). Zn(2+) serves as cofactor.

It is found in the cytoplasm. It catalyses the reaction N(6)-carboxybiotinyl-L-lysyl-[protein] + acetyl-CoA = N(6)-biotinyl-L-lysyl-[protein] + malonyl-CoA. It functions in the pathway lipid metabolism; malonyl-CoA biosynthesis; malonyl-CoA from acetyl-CoA: step 1/1. Its function is as follows. Component of the acetyl coenzyme A carboxylase (ACC) complex. Biotin carboxylase (BC) catalyzes the carboxylation of biotin on its carrier protein (BCCP) and then the CO(2) group is transferred by the transcarboxylase to acetyl-CoA to form malonyl-CoA. In Clostridium botulinum (strain Eklund 17B / Type B), this protein is Acetyl-coenzyme A carboxylase carboxyl transferase subunit beta.